A 121-amino-acid polypeptide reads, in one-letter code: Putative iron-sulfur cluster insertion protein ErpA (121 aa).

Residues C49, C113, and C115 each coordinate iron-sulfur cluster.

Belongs to the HesB/IscA family. As to quaternary structure, homodimer. Requires iron-sulfur cluster as cofactor.

In terms of biological role, required for insertion of 4Fe-4S clusters. This chain is Putative iron-sulfur cluster insertion protein ErpA, found in Nitrosomonas europaea (strain ATCC 19718 / CIP 103999 / KCTC 2705 / NBRC 14298).